The sequence spans 775 residues: Melanoma-associated antigen D1 (775 aa).

The tract at residues 37 to 330 is disordered; the sequence is SEAPPTSQAT…PARQTPSAWQ (294 aa). The span at 39 to 50 shows a compositional bias: low complexity; sequence APPTSQATAAAS. Composition is skewed to polar residues over residues 52–63, 84–100, 150–180, 223–237, 250–260, and 297–330; these read PNASPQSSQPPT, KAQNTTTKGPNDYSQAR, GQNTTTKAGPSATYNFTQSPSANEMTNNQPK, AQTSADGSQAQNVES, NNLNVEENSNG, and LAWQNPSGWQNQTARQTPPARQSPPARQTPSAWQ. 19 repeat units span residues 293–298, 299–304, 305–310, 329–334, 335–340, 341–346, 347–352, 353–358, 359–364, 365–370, 371–376, 377–382, 383–388, 389–394, 395–400, 401–406, 407–412, 413–418, and 419–424. Positions 293 to 441 are 22 X 6 AA tandem repeats of W-[PQ]-X-P-X-X; sequence WQTPLAWQNP…IPPDWQNLRP (149 aa). The tract at residues 374-407 is disordered; sequence TPGWQSPPSWQAPPSWQSPQDWQGPPDWQLPPDW. A compositionally biased stretch (low complexity) spans 375–406; it reads PGWQSPPSWQAPPSWQSPQDWQGPPDWQLPPD. Residues 425–429 form a 20; approximate repeat; sequence WIPAD. 2 consecutive repeat copies span residues 430-435 and 436-441. Positions 437–452 are enriched in low complexity; that stretch reads QNLRPSPNLRSSPNSR. Residues 437–463 form a disordered region; that stretch reads QNLRPSPNLRSSPNSRASQNQGPPQPR. Positions 468-666 constitute an MAGE domain; it reads LQERANKLVK…RDWTAQFMEA (199 aa).

Interacts with DLX5, DLX7 and MSX2 and forms homomultimers. Interacts with UNC5A. Interacts with TRIM28 and PJA1. Interacts with NGFR/p75NTR and RORA. As to expression, ubiquitous and in the seminiferous tubules expressed in Sertoli cells but not in germ cells. Expression decreases in all tissues with increased age and is detectable only in brain cortex and lung.

The protein localises to the cytoplasm. It is found in the cell membrane. It localises to the nucleus. Functionally, involved in the apoptotic response after nerve growth factor (NGF) binding in neuronal cells. Inhibits cell cycle progression, and facilitates NGFR-mediated apoptosis. May act as a regulator of the function of DLX family members. May enhance ubiquitin ligase activity of RING-type zinc finger-containing E3 ubiquitin-protein ligases. Proposed to act through recruitment and/or stabilization of the Ubl-conjugating enzyme (E2) at the E3:substrate complex. Plays a role in the circadian rhythm regulation. May act as RORA co-regulator, modulating the expression of core clock genes such as BMAL1 and NFIL3, induced, or NR1D1, repressed. The polypeptide is Melanoma-associated antigen D1 (Maged1) (Rattus norvegicus (Rat)).